A 357-amino-acid polypeptide reads, in one-letter code: 3-dehydroquinate synthase (357 aa).

Residues 104–108, 128–129, Lys-141, and 168–171 contribute to the NAD(+) site; these read GVVGD, TT, and FLET. Positions 183, 243, and 260 each coordinate Zn(2+).

It belongs to the sugar phosphate cyclases superfamily. Dehydroquinate synthase family. NAD(+) is required as a cofactor. Requires Co(2+) as cofactor. The cofactor is Zn(2+).

Its subcellular location is the cytoplasm. The enzyme catalyses 7-phospho-2-dehydro-3-deoxy-D-arabino-heptonate = 3-dehydroquinate + phosphate. It functions in the pathway metabolic intermediate biosynthesis; chorismate biosynthesis; chorismate from D-erythrose 4-phosphate and phosphoenolpyruvate: step 2/7. In terms of biological role, catalyzes the conversion of 3-deoxy-D-arabino-heptulosonate 7-phosphate (DAHP) to dehydroquinate (DHQ). This is 3-dehydroquinate synthase from Streptococcus pyogenes serotype M3 (strain ATCC BAA-595 / MGAS315).